Consider the following 205-residue polypeptide: Ephrin-A1 (205 aa).

The signal sequence occupies residues 1 to 17; that stretch reads MEFLWAPLLGLCCSLAA. Residues 18 to 161 form the Ephrin RBD domain; it reads ADRHIVFWNS…THNPQAHVNP (144 aa). Asparagine 26 is a glycosylation site (N-linked (GlcNAc...) asparagine). Cystine bridges form between cysteine 51–cysteine 92 and cysteine 80–cysteine 140. Residue serine 182 is the site of GPI-anchor amidated serine attachment. Residues 183-205 constitute a propeptide, removed in mature form; it reads AAPRLFPLVWAVLLLPLLLLQSQ.

This sequence belongs to the ephrin family. Monomer. Homodimer. Forms heterodimers with EPHA2. Binds to the receptor tyrosine kinases EPHA2, EPHA3, EPHA4, EPHA5, EPHA6 and EPHA7. Also binds with low affinity to EPHA1. Undergoes proteolysis by a metalloprotease to give rise to a soluble monomeric form. Post-translationally, N-Glycosylation is required for binding to EPHA2 receptor and inducing its internalization. In terms of tissue distribution, expressed in myogenic progenitor cells.

The protein resides in the cell membrane. The protein localises to the secreted. Cell surface GPI-bound ligand for Eph receptors, a family of receptor tyrosine kinases which are crucial for migration, repulsion and adhesion during neuronal, vascular and epithelial development. Binds promiscuously Eph receptors residing on adjacent cells, leading to contact-dependent bidirectional signaling into neighboring cells. Plays an important role in angiogenesis and tumor neovascularization. The recruitment of VAV2, VAV3 and PI3-kinase p85 subunit by phosphorylated EPHA2 is critical for EFNA1-induced RAC1 GTPase activation and vascular endothelial cell migration and assembly. Exerts anti-oncogenic effects in tumor cells through activation and down-regulation of EPHA2. Activates EPHA2 by inducing tyrosine phosphorylation which leads to its internalization and degradation. Acts as a negative regulator in the tumorigenesis of gliomas by down-regulating EPHA2 and FAK. Can evoke collapse of embryonic neuronal growth cone and regulates dendritic spine morphogenesis. In Mus musculus (Mouse), this protein is Ephrin-A1 (Efna1).